A 471-amino-acid chain; its full sequence is MSKRAKVVVSPEKIKKQSDIIEELKIYNRGKNKKYMITTYGCQMNEHDSETLSGMLENMGYSITTNKEEANLIIYNTCCVRENAELKVYGNIGALKALKKKNEDLIIAVCGCMMQQPQVVKEIKRKYRHVDLVFGTHNLYRFPELLSRSMETEGMFIEVWDEETGIVEGLPANRKYDLKGFINIMYGCNNFCTYCIVPYTRGRERSREVADIIREATDLANNGTKEITLLGQNVNSYGKTLEHPIDFADLLRALNKIDGIERIRFMTSHPKDLSERLIDAIAECDKVCEHFHLPFQSGSNQILKAMNRKYTKENYLSIVKKLKDRIPNIGLTTDIIVGFPGETEEDFQDTLDIVQEARYDSAYTFLYSIREGTPAAKMQNQIDEKVKQERFSRLLDKVNEISAEINQSYLNKVVEVLVEGPSKTDSNKLMGRTRQNKLVNFSGDESLIGKLVNVRIVECRTFSLNGEVIQE.

The 119-residue stretch at 33 to 151 folds into the MTTase N-terminal domain; sequence KKYMITTYGC…FPELLSRSME (119 aa). Positions 42, 78, 112, 188, 192, and 195 each coordinate [4Fe-4S] cluster. One can recognise a Radical SAM core domain in the interval 174-404; it reads RKYDLKGFIN…LDKVNEISAE (231 aa). Residues 407 to 470 enclose the TRAM domain; it reads QSYLNKVVEV…TFSLNGEVIQ (64 aa).

This sequence belongs to the methylthiotransferase family. MiaB subfamily. Monomer. The cofactor is [4Fe-4S] cluster.

Its subcellular location is the cytoplasm. The catalysed reaction is N(6)-dimethylallyladenosine(37) in tRNA + (sulfur carrier)-SH + AH2 + 2 S-adenosyl-L-methionine = 2-methylsulfanyl-N(6)-dimethylallyladenosine(37) in tRNA + (sulfur carrier)-H + 5'-deoxyadenosine + L-methionine + A + S-adenosyl-L-homocysteine + 2 H(+). Its function is as follows. Catalyzes the methylthiolation of N6-(dimethylallyl)adenosine (i(6)A), leading to the formation of 2-methylthio-N6-(dimethylallyl)adenosine (ms(2)i(6)A) at position 37 in tRNAs that read codons beginning with uridine. This is tRNA-2-methylthio-N(6)-dimethylallyladenosine synthase from Alkaliphilus oremlandii (strain OhILAs) (Clostridium oremlandii (strain OhILAs)).